Consider the following 519-residue polypeptide: Sugar transport protein MST5 (519 aa).

The Cytoplasmic portion of the chain corresponds to 1-18 (MAGGAMVQTVGGKTYPGK). The chain crosses the membrane as a helical span at residues 19-39 (MTAFVFFTCLVASSGGLIFGY). Over 40–80 (DIGISGGVTSMDSFLSEFFPSVYAQAKASKDTNQYCKFDSQ) the chain is Extracellular. Residues 81 to 101 (LLTLFTSSLYLAALATSFVAA) form a helical membrane-spanning segment. At 102 to 110 (WVTRVFGRK) the chain is on the cytoplasmic side. The chain crosses the membrane as a helical span at residues 111–127 (WSMFCGGVTFLAGSALN). Residue glycine 128 is a topological domain, extracellular. The chain crosses the membrane as a helical span at residues 129–149 (AATDVMMLILGRILLGIGVGF). Over 150–167 (ANQSVPLYLSEMAPANLR) the chain is Cytoplasmic. The chain crosses the membrane as a helical span at residues 168-188 (GMLNIGFQLMTTIGILSANLI). Residues 189-202 (NYATSSIEGGWGWR) lie on the Extracellular side of the membrane. The helical transmembrane segment at 203 to 223 (IGLGLAGVPALIITLGALVLP) threads the bilayer. At 224–295 (DTPNSLIARG…IAILIPCFQQ (72 aa)) the chain is on the cytoplasmic side. Residues 296 to 316 (LTGINVIMFYAPVLFLTIGFA) form a helical membrane-spanning segment. The Extracellular segment spans residues 317–321 (GDASL). A helical membrane pass occupies residues 322–342 (MSAVITGLVNMFATVVSIISV). At 343-357 (DRLGRRVLFLQGGTQ) the chain is on the cytoplasmic side. Residues 358 to 378 (MFISQVVVGTLIALQFGVAGV) traverse the membrane as a helical segment. Residues 379-386 (GEMSRSYA) are Extracellular-facing. Residues 387–407 (ILLVLFICMYVAGFAWSWGPL) traverse the membrane as a helical segment. Residues 408-426 (GWLVPSEVFALEIRSAGQS) are Cytoplasmic-facing. A helical transmembrane segment spans residues 427–447 (IAVCVNMMLTFVIGQAFLTML). Topologically, residues 448–451 (CHLK) are extracellular. Residues 452–472 (FGLFYFFAGWMLVMTTFVALF) form a helical membrane-spanning segment. The Cytoplasmic segment spans residues 473–519 (LPETKGVPIEEMNHVWSRHWFWGSYVTAHDVAGAGAGGGGNRRSHNV).

This sequence belongs to the major facilitator superfamily. Sugar transporter (TC 2.A.1.1) family. Expressed in panicles before heading. Expressed in flowers before pollination.

It is found in the membrane. In terms of biological role, mediates active uptake of hexoses by sugar:proton symport. Can transport glucose, xylose and 3-O-methylglucose. May play a role at the early stage of seed development. This chain is Sugar transport protein MST5, found in Oryza sativa subsp. japonica (Rice).